The chain runs to 225 residues: Phosphoserine phosphatase (225 aa).

An N-acetylmethionine modification is found at Met1. The Nucleophile role is filled by Asp20. Mg(2+) is bound by residues Asp20 and Asp22. 20–22 (DVD) lines the L-serine pocket. Catalysis depends on Asp22, which acts as the Proton donor. Met52 contributes to the O-phospho-L-serine binding site. Gly53 serves as a coordination point for phosphate. Residues 109–111 (SGG) and Lys158 each bind L-serine. O-phospho-L-serine-binding positions include 109–111 (SGG) and Lys158. Asp179 provides a ligand contact to Mg(2+). Thr182 is a binding site for O-phospho-L-serine. Thr182 is a binding site for phosphate.

It belongs to the HAD-like hydrolase superfamily. SerB family. Homodimer. Mg(2+) serves as cofactor.

It localises to the cytoplasm. Its subcellular location is the cytosol. It catalyses the reaction O-phospho-L-serine + H2O = L-serine + phosphate. It carries out the reaction O-phospho-D-serine + H2O = D-serine + phosphate. Its pathway is amino-acid biosynthesis; L-serine biosynthesis; L-serine from 3-phospho-D-glycerate: step 3/3. Functionally, catalyzes the last irreversible step in the biosynthesis of L-serine from carbohydrates, the dephosphorylation of O-phospho-L-serine to L-serine. L-serine can then be used in protein synthesis, to produce other amino acids, in nucleotide metabolism or in glutathione synthesis, or can be racemized to D-serine, a neuromodulator. May also act on O-phospho-D-serine. The sequence is that of Phosphoserine phosphatase from Mus musculus (Mouse).